Here is a 364-residue protein sequence, read N- to C-terminus: tRNA 2-selenouridine synthase (364 aa).

Residues 14–137 (LIADTPIIDV…LRQTTIQATI (124 aa)) form the Rhodanese domain. The active-site S-selanylcysteine intermediate is Cys97.

Belongs to the SelU family. Monomer.

The enzyme catalyses 5-methylaminomethyl-2-thiouridine(34) in tRNA + selenophosphate + (2E)-geranyl diphosphate + H2O + H(+) = 5-methylaminomethyl-2-selenouridine(34) in tRNA + (2E)-thiogeraniol + phosphate + diphosphate. It carries out the reaction 5-methylaminomethyl-2-thiouridine(34) in tRNA + (2E)-geranyl diphosphate = 5-methylaminomethyl-S-(2E)-geranyl-thiouridine(34) in tRNA + diphosphate. The catalysed reaction is 5-methylaminomethyl-S-(2E)-geranyl-thiouridine(34) in tRNA + selenophosphate + H(+) = 5-methylaminomethyl-2-(Se-phospho)selenouridine(34) in tRNA + (2E)-thiogeraniol. It catalyses the reaction 5-methylaminomethyl-2-(Se-phospho)selenouridine(34) in tRNA + H2O = 5-methylaminomethyl-2-selenouridine(34) in tRNA + phosphate. In terms of biological role, involved in the post-transcriptional modification of the uridine at the wobble position (U34) of tRNA(Lys), tRNA(Glu) and tRNA(Gln). Catalyzes the conversion of 2-thiouridine (S2U-RNA) to 2-selenouridine (Se2U-RNA). Acts in a two-step process involving geranylation of 2-thiouridine (S2U) to S-geranyl-2-thiouridine (geS2U) and subsequent selenation of the latter derivative to 2-selenouridine (Se2U) in the tRNA chain. In Escherichia coli (strain 55989 / EAEC), this protein is tRNA 2-selenouridine synthase.